The sequence spans 173 residues: Photosystem I assembly protein Ycf3 (173 aa).

TPR repeat units lie at residues 35 to 68 (AFAY…EEDP), 72 to 105 (SFIL…NPKM), and 120 to 153 (GQRS…APNN).

The protein belongs to the Ycf3 family.

Its subcellular location is the cellular thylakoid membrane. Essential for the assembly of the photosystem I (PSI) complex. May act as a chaperone-like factor to guide the assembly of the PSI subunits. This is Photosystem I assembly protein Ycf3 from Synechococcus elongatus (strain ATCC 33912 / PCC 7942 / FACHB-805) (Anacystis nidulans R2).